Here is a 167-residue protein sequence, read N- to C-terminus: Photosystem I assembly protein Ycf3 (167 aa).

3 TPR repeats span residues 35–68, 72–105, and 120–153; these read AFSY…ETDA, SYIL…NPSL, and GEQA…APTN.

This sequence belongs to the Ycf3 family.

The protein resides in the plastid. It localises to the chloroplast thylakoid membrane. In terms of biological role, essential for the assembly of the photosystem I (PSI) complex. May act as a chaperone-like factor to guide the assembly of the PSI subunits. The protein is Photosystem I assembly protein Ycf3 of Chlorella vulgaris (Green alga).